The following is a 267-amino-acid chain: Sepiapterin reductase (267 aa).

At Met1 the chain carries N-acetylmethionine. Position 20 to 26 (20 to 26) interacts with NADP(+); it reads GASRGFG. At Ser38 the chain carries Phosphoserine. NADP(+) is bound by residues 48–49 and 75–76; these read RN and DL. Substrate-binding positions include 163–164 and Tyr176; that span reads SI. Lys180 contacts NADP(+). Residue Ser201 is modified to Phosphoserine. Gly205 serves as a coordination point for substrate. 207 to 212 is an NADP(+) binding site; that stretch reads LDTDMQ. At Ser219 the chain carries Phosphoserine. Asp263 serves as a coordination point for substrate.

The protein belongs to the sepiapterin reductase family. Homodimer.

The protein localises to the cytoplasm. It carries out the reaction L-erythro-7,8-dihydrobiopterin + NADP(+) = L-sepiapterin + NADPH + H(+). The catalysed reaction is (6R)-L-erythro-5,6,7,8-tetrahydrobiopterin + 2 NADP(+) = 6-pyruvoyl-5,6,7,8-tetrahydropterin + 2 NADPH + 2 H(+). Its function is as follows. Catalyzes the final one or two reductions in tetra-hydrobiopterin biosynthesis to form 5,6,7,8-tetrahydrobiopterin. The chain is Sepiapterin reductase (SPR) from Bos taurus (Bovine).